We begin with the raw amino-acid sequence, 37 residues long: MVEVFLFGIVLGLIPITLAGLFVTAYLQYRRGDQLDL.

The helical transmembrane segment at 5–25 (FLFGIVLGLIPITLAGLFVTA) threads the bilayer.

It belongs to the PetG family. As to quaternary structure, the 4 large subunits of the cytochrome b6-f complex are cytochrome b6, subunit IV (17 kDa polypeptide, PetD), cytochrome f and the Rieske protein, while the 4 small subunits are PetG, PetL, PetM and PetN. The complex functions as a dimer.

It localises to the plastid. It is found in the chloroplast thylakoid membrane. Its function is as follows. Component of the cytochrome b6-f complex, which mediates electron transfer between photosystem II (PSII) and photosystem I (PSI), cyclic electron flow around PSI, and state transitions. PetG is required for either the stability or assembly of the cytochrome b6-f complex. The protein is Cytochrome b6-f complex subunit 5 of Platanus occidentalis (Sycamore).